Consider the following 364-residue polypeptide: UDP-N-acetylglucosamine--N-acetylmuramyl-(pentapeptide) pyrophosphoryl-undecaprenol N-acetylglucosamine transferase (364 aa).

UDP-N-acetyl-alpha-D-glucosamine-binding positions include 10-12 (TGG), Asn128, Arg170, Ser199, Ile250, and Gln295.

This sequence belongs to the glycosyltransferase 28 family. MurG subfamily.

It is found in the cell inner membrane. The catalysed reaction is di-trans,octa-cis-undecaprenyl diphospho-N-acetyl-alpha-D-muramoyl-L-alanyl-D-glutamyl-meso-2,6-diaminopimeloyl-D-alanyl-D-alanine + UDP-N-acetyl-alpha-D-glucosamine = di-trans,octa-cis-undecaprenyl diphospho-[N-acetyl-alpha-D-glucosaminyl-(1-&gt;4)]-N-acetyl-alpha-D-muramoyl-L-alanyl-D-glutamyl-meso-2,6-diaminopimeloyl-D-alanyl-D-alanine + UDP + H(+). The protein operates within cell wall biogenesis; peptidoglycan biosynthesis. Functionally, cell wall formation. Catalyzes the transfer of a GlcNAc subunit on undecaprenyl-pyrophosphoryl-MurNAc-pentapeptide (lipid intermediate I) to form undecaprenyl-pyrophosphoryl-MurNAc-(pentapeptide)GlcNAc (lipid intermediate II). This is UDP-N-acetylglucosamine--N-acetylmuramyl-(pentapeptide) pyrophosphoryl-undecaprenol N-acetylglucosamine transferase from Chlorobaculum tepidum (strain ATCC 49652 / DSM 12025 / NBRC 103806 / TLS) (Chlorobium tepidum).